A 147-amino-acid polypeptide reads, in one-letter code: 3-dehydroquinate dehydratase (147 aa).

The active-site Proton acceptor is Tyr-23. Substrate is bound by residues Asn-74, His-80, and Asp-87. His-100 serves as the catalytic Proton donor. Substrate contacts are provided by residues Ile-101–Ser-102 and Arg-111.

It belongs to the type-II 3-dehydroquinase family. Homododecamer.

The catalysed reaction is 3-dehydroquinate = 3-dehydroshikimate + H2O. It participates in metabolic intermediate biosynthesis; chorismate biosynthesis; chorismate from D-erythrose 4-phosphate and phosphoenolpyruvate: step 3/7. Its function is as follows. Catalyzes a trans-dehydration via an enolate intermediate. In Prochlorococcus marinus (strain MIT 9215), this protein is 3-dehydroquinate dehydratase.